The sequence spans 350 residues: Ribosomal RNA large subunit methyltransferase M (350 aa).

S-adenosyl-L-methionine is bound by residues Ser-184, 217-220 (APGG), Asp-236, Asp-256, and Asp-272. The active-site Proton acceptor is Lys-301.

Belongs to the class I-like SAM-binding methyltransferase superfamily. RNA methyltransferase RlmE family. RlmM subfamily. In terms of assembly, monomer.

It is found in the cytoplasm. It catalyses the reaction cytidine(2498) in 23S rRNA + S-adenosyl-L-methionine = 2'-O-methylcytidine(2498) in 23S rRNA + S-adenosyl-L-homocysteine + H(+). Catalyzes the 2'-O-methylation at nucleotide C2498 in 23S rRNA. This Marinomonas sp. (strain MWYL1) protein is Ribosomal RNA large subunit methyltransferase M.